A 407-amino-acid polypeptide reads, in one-letter code: Protease ElaD (407 aa).

His231 is a catalytic residue. Catalysis depends on Cys317, which acts as the Nucleophile.

This sequence belongs to the peptidase C79 family.

Functionally, protease that can act as an efficient and specific deubiquitinating enzyme in vitro. Does not possess desumoylating and deneddylating activities. The physiological substrate is unknown. The protein is Protease ElaD (elaD) of Escherichia coli O157:H7.